Reading from the N-terminus, the 442-residue chain is CAAX prenyl protease 1 homolog (442 aa).

The Lumenal portion of the chain corresponds to 1 to 62 (MDASCLFKAL…KARDYKIDNH (62 aa)). A helical transmembrane segment spans residues 63–83 (LFGFFHSWFNQLLLTAQLIGG). A topological domain (cytoplasmic) is located at residue Tyr84. A helical membrane pass occupies residues 85–105 (YPFLWYATASYPLHVAVFLSI). Residues 106–146 (NSIIETIIDLPWDLYSTFIIEDAHGFNKQTIGFYFVDKIKK) lie on the Lumenal side of the membrane. A helical membrane pass occupies residues 147 to 167 (MLVGFALTMPIVYGIEWIIVN). The Cytoplasmic segment spans residues 168–170 (GGP). A helical membrane pass occupies residues 171–191 (YFFVYIWLFVSVVVLLLMTIY). The Lumenal segment spans residues 192–311 (PTFIAPLFDK…ELGHWALWHT (120 aa)). His301 contacts Zn(2+). Glu302 is an active-site residue. His305 is a Zn(2+) binding site. Residues 312-332 (LINLVITEVNLFFSFAVFGYF) form a helical membrane-spanning segment. The Cytoplasmic segment spans residues 333 to 349 (YKWEALYQGFGYHDTPP). Residues 350–370 (VIGMMLIFQFVLALYNQLASI) form a helical membrane-spanning segment. Residues 371-442 (GMVIHSRSAE…AVRAFQAKNK (72 aa)) are Lumenal-facing. Glu380 serves as a coordination point for Zn(2+). Catalysis depends on Asp384, which acts as the Proton donor.

This sequence belongs to the peptidase M48A family. The cofactor is Zn(2+).

Its subcellular location is the endoplasmic reticulum membrane. The protein resides in the membrane. It carries out the reaction Hydrolyzes the peptide bond -P2-(S-farnesyl or geranylgeranyl)C-P1'-P2'-P3'-COOH where P1' and P2' are amino acids with aliphatic side chains and P3' is any C-terminal residue.. In terms of biological role, proteolytically removes the C-terminal three residues of farnesylated proteins. The protein is CAAX prenyl protease 1 homolog of Caenorhabditis elegans.